The sequence spans 101 residues: NAD(P)H-quinone oxidoreductase subunit 4L, chloroplastic (101 aa).

3 helical membrane passes run 2–22 (MLEHVLVLSAYLFSIGIYGLI), 32–52 (MCLELILNAVNLNFVTFSDFF), and 61–81 (IFSIFVIAIAAAEAAIGPAIV).

Belongs to the complex I subunit 4L family. As to quaternary structure, NDH is composed of at least 16 different subunits, 5 of which are encoded in the nucleus.

It localises to the plastid. The protein localises to the chloroplast thylakoid membrane. The enzyme catalyses a plastoquinone + NADH + (n+1) H(+)(in) = a plastoquinol + NAD(+) + n H(+)(out). It catalyses the reaction a plastoquinone + NADPH + (n+1) H(+)(in) = a plastoquinol + NADP(+) + n H(+)(out). Its function is as follows. NDH shuttles electrons from NAD(P)H:plastoquinone, via FMN and iron-sulfur (Fe-S) centers, to quinones in the photosynthetic chain and possibly in a chloroplast respiratory chain. The immediate electron acceptor for the enzyme in this species is believed to be plastoquinone. Couples the redox reaction to proton translocation, and thus conserves the redox energy in a proton gradient. The chain is NAD(P)H-quinone oxidoreductase subunit 4L, chloroplastic from Fagopyrum esculentum subsp. ancestrale (Wild buckwheat).